Here is a 579-residue protein sequence, read N- to C-terminus: Probable cholinesterase (579 aa).

An N-terminal signal peptide occupies residues 1–19 (MTDHKIIMLLLLGIYCIQA). N-linked (GlcNAc...) asparagine; by host glycans are attached at residues Asn-77 and Asn-144. Ser-217 serves as the catalytic Acyl-ester intermediate. N-linked (GlcNAc...) asparagine; by host glycans are attached at residues Asn-257, Asn-269, and Asn-283. Residue Glu-337 is the Charge relay system of the active site. N-linked (GlcNAc...) asparagine; by host glycosylation is found at Asn-373 and Asn-394. Catalysis depends on His-451, which acts as the Charge relay system. Asn-469 is a glycosylation site (N-linked (GlcNAc...) asparagine; by host).

Belongs to the type-B carboxylesterase/lipase family.

The enzyme catalyses an acylcholine + H2O = a carboxylate + choline + H(+). May be involved in the disruption of the host membrane. This is Probable cholinesterase from Acanthamoeba polyphaga mimivirus (APMV).